A 38-amino-acid chain; its full sequence is L-amino-acid oxidase (38 aa).

It belongs to the flavin monoamine oxidase family. FIG1 subfamily. As to quaternary structure, homodimer; non-covalently linked. FAD serves as cofactor. In terms of processing, N-glycosylated. Expressed by the venom gland.

The protein resides in the secreted. The enzyme catalyses an L-alpha-amino acid + O2 + H2O = a 2-oxocarboxylate + H2O2 + NH4(+). The catalysed reaction is L-leucine + O2 + H2O = 4-methyl-2-oxopentanoate + H2O2 + NH4(+). It carries out the reaction L-phenylalanine + O2 + H2O = 3-phenylpyruvate + H2O2 + NH4(+). It catalyses the reaction L-tryptophan + O2 + H2O = indole-3-pyruvate + H2O2 + NH4(+). The enzyme catalyses L-methionine + O2 + H2O = 4-methylsulfanyl-2-oxobutanoate + H2O2 + NH4(+). The catalysed reaction is L-arginine + O2 + H2O = 5-guanidino-2-oxopentanoate + H2O2 + NH4(+). It carries out the reaction L-2-aminohexanoate + O2 + H2O = 2-oxohexanoate + H2O2 + NH4(+). It catalyses the reaction L-2-aminopentanoate + O2 + H2O = 2-oxopentanoate + H2O2 + NH4(+). The enzyme catalyses L-tyrosine + O2 + H2O = 3-(4-hydroxyphenyl)pyruvate + H2O2 + NH4(+). In terms of biological role, catalyzes an oxidative deamination of predominantly hydrophobic and aromatic L-amino acids, thus producing hydrogen peroxide that may contribute to the diverse toxic effects of this enzyme. Is very active against L-Phe and L-Tyr, moderately active against L-Trp, L-Met, L-Leu, L-norleucine (L-2-aminohexanoate), L-Arg and L-norvaline (L-2-aminopentanoate), and slightly active against L-His, L-cystine, and L-Ile. L-Gln, L-Lys, L-Asn, L-ornithine, L-Ala and L-Val are oxidized very slowly. Exhibits diverse biological activities, such as hemorrhage, hemolysis, edema, apoptosis of vascular endothelial cells or tumor cell lines, antibacterial and antiparasitic activities. This protein inhibits both agonist- and shear stress-induced platelet aggregation (SIPA). Effects of snake L-amino oxidases on platelets are controversial, since they either induce aggregation or inhibit agonist-induced aggregation. These different effects are probably due to different experimental conditions. This Naja kaouthia (Monocled cobra) protein is L-amino-acid oxidase.